A 551-amino-acid chain; its full sequence is Chaperonin GroEL (551 aa).

ATP is bound by residues 30 to 33 (TLGP), lysine 51, 87 to 91 (DGTTT), glycine 415, and aspartate 496.

The protein belongs to the chaperonin (HSP60) family. In terms of assembly, forms a cylinder of 14 subunits composed of two heptameric rings stacked back-to-back. Interacts with the co-chaperonin GroES.

The protein localises to the cytoplasm. It catalyses the reaction ATP + H2O + a folded polypeptide = ADP + phosphate + an unfolded polypeptide.. Functionally, together with its co-chaperonin GroES, plays an essential role in assisting protein folding. The GroEL-GroES system forms a nano-cage that allows encapsulation of the non-native substrate proteins and provides a physical environment optimized to promote and accelerate protein folding. The sequence is that of Chaperonin GroEL from Maricaulis maris (strain MCS10) (Caulobacter maris).